Reading from the N-terminus, the 296-residue chain is MTTITPIMVKELRERTGAAVMACKKALQETNGDMEAAIDLLRKAGDAKAAKRAGKTAAEGVIVIAISKDQKKGFMAEVNSETDFVARDTNFMAFASKVAERGLAEGVSDVAATLALPIEPNSSSTIEDERKALVNRIGENIQIRRVASLSSDGVVGHYSHGGRIGVLLALDVPNPELVKGLAMHVAAFNPQAVSANQVSTEFVEKEKEIFLARAQETGKPANIIEKMVKGQVEKLLKEVSLEGQSFVKDPEKLVGDLLKAEKAKVLAFLRFEVGEGVEKESQNFADEVMAQVQGNR.

The tract at residues 82–85 (TDFV) is involved in Mg(2+) ion dislocation from EF-Tu.

It belongs to the EF-Ts family.

Its subcellular location is the cytoplasm. Functionally, associates with the EF-Tu.GDP complex and induces the exchange of GDP to GTP. It remains bound to the aminoacyl-tRNA.EF-Tu.GTP complex up to the GTP hydrolysis stage on the ribosome. This chain is Elongation factor Ts, found in Coxiella burnetii (strain CbuK_Q154) (Coxiella burnetii (strain Q154)).